The primary structure comprises 90 residues: Conotoxin Rg9.1 (90 aa).

A signal peptide spans 1–20 (MHLSLARSAVLILLLLFALG). Positions 21-60 (NFVGVQPGQITRDADHGINLRSLRKQMSRSPLVKGAFCGQ) are excised as a propeptide. 3 disulfides stabilise this stretch: Cys58-Cys71, Cys62-Cys73, and Cys67-Cys80.

It belongs to the conotoxin P superfamily. As to expression, expressed by the venom duct.

It localises to the secreted. Probable neurotoxin that inhibits ion channels. The protein is Conotoxin Rg9.1 of Conus regius (Crown cone).